We begin with the raw amino-acid sequence, 425 residues long: Septin-11 (425 aa).

Ala2 carries the N-acetylalanine modification. Position 9 is a phosphoserine (Ser9). One can recognise a Septin-type G domain in the interval 38 to 304; that stretch reads QGFCFNILCV…ELYRRCKLEE (267 aa). Residues 48-55 are G1 motif; that stretch reads GETGIGKS. Residues 48–55, Gly103, 184–192, Gly238, and Arg253 each bind GTP; these read GETGIGKS and KADTIAKNE. The segment at 100 to 103 is G3 motif; it reads DTVG. A G4 motif region spans residues 183–186; the sequence is AKAD. Positions 320 to 410 form a coiled coil; the sequence is QETYEAKRNE…AAQLLQSQAQ (91 aa). Residues 399–425 form a disordered region; the sequence is KAAAQLLQSQAQQSGAQQTKKDKDKKN. Positions 401–416 are enriched in low complexity; the sequence is AAQLLQSQAQQSGAQQ.

The protein belongs to the TRAFAC class TrmE-Era-EngA-EngB-Septin-like GTPase superfamily. Septin GTPase family. In terms of assembly, septins polymerize into heterooligomeric protein complexes that form filaments, and can associate with cellular membranes, actin filaments and microtubules. Forms homooligomers. GTPase activity is required for filament formation. Interacts with SEPTIN7, SEPTIN9 and SEPTIN12.

Its subcellular location is the cytoplasm. It is found in the cytoskeleton. The protein resides in the synapse. The protein localises to the cell projection. It localises to the dendritic spine. Its subcellular location is the axon. Filament-forming cytoskeletal GTPase. May play a role in cytokinesis (Potential). May play a role in the cytoarchitecture of neurons, including dendritic arborization and dendritic spines, and in GABAergic synaptic connectivity. The protein is Septin-11 of Bos taurus (Bovine).